Here is a 403-residue protein sequence, read N- to C-terminus: Aloesone synthase (403 aa).

The active site involves Cys-174. CoA is bound by residues Ser-281 and 318–321 (GGRA).

This sequence belongs to the thiolase-like superfamily. Chalcone/stilbene synthases family. As to quaternary structure, homodimer.

Its pathway is secondary metabolite biosynthesis; flavonoid biosynthesis. In terms of biological role, catalyzes the iterative condensations of 6, 7 or 8 molecules of malonyl-CoA to produce various aromatic polyketides. Produces the heptaketide aloesone, the aglycone of aloesin, from 7 molecules of malonyl-CoA as a major product. Also able to produce a hexaketide pyrone, a heptaketide 6-(2-acetyl-3,5-dihydroxybenzyl)-4-hydroxy-2-pyrone, a novel heptaketide 6-(2-(2,4-dihydroxy-6-methylphenyl)-2-oxoethyl)-4-hydroxy-2-pyrone and octaketides SEK4/SEK4b. The protein is Aloesone synthase (PKS3) of Aloe arborescens (Kidachi aloe).